The chain runs to 657 residues: Threonine--tRNA ligase (657 aa).

A TGS domain is found at 1-61 (MINVTLPDGS…EGDASVAIIT (61 aa)). A catalytic region spans residues 244-549 (DHRKLGAQLD…LIENYAGSFP (306 aa)). Residues C349, H400, and H526 each contribute to the Zn(2+) site.

It belongs to the class-II aminoacyl-tRNA synthetase family. Homodimer. It depends on Zn(2+) as a cofactor.

The protein localises to the cytoplasm. The catalysed reaction is tRNA(Thr) + L-threonine + ATP = L-threonyl-tRNA(Thr) + AMP + diphosphate + H(+). Its function is as follows. Catalyzes the attachment of threonine to tRNA(Thr) in a two-step reaction: L-threonine is first activated by ATP to form Thr-AMP and then transferred to the acceptor end of tRNA(Thr). Also edits incorrectly charged L-seryl-tRNA(Thr). This chain is Threonine--tRNA ligase, found in Hyphomonas neptunium (strain ATCC 15444).